The primary structure comprises 124 residues: S-adenosylmethionine decarboxylase proenzyme (124 aa).

The active-site Schiff-base intermediate with substrate; via pyruvic acid is the Ser63. Ser63 is modified (pyruvic acid (Ser); by autocatalysis). His68 acts as the Proton acceptor; for processing activity in catalysis. The Proton donor; for catalytic activity role is filled by Cys83.

This sequence belongs to the prokaryotic AdoMetDC family. Type 1 subfamily. As to quaternary structure, heterotetramer of two alpha and two beta chains arranged as a dimer of alpha/beta heterodimers. Pyruvate is required as a cofactor. Is synthesized initially as an inactive proenzyme. Formation of the active enzyme involves a self-maturation process in which the active site pyruvoyl group is generated from an internal serine residue via an autocatalytic post-translational modification. Two non-identical subunits are generated from the proenzyme in this reaction, and the pyruvate is formed at the N-terminus of the alpha chain, which is derived from the carboxyl end of the proenzyme. The post-translation cleavage follows an unusual pathway, termed non-hydrolytic serinolysis, in which the side chain hydroxyl group of the serine supplies its oxygen atom to form the C-terminus of the beta chain, while the remainder of the serine residue undergoes an oxidative deamination to produce ammonia and the pyruvoyl group blocking the N-terminus of the alpha chain.

The enzyme catalyses S-adenosyl-L-methionine + H(+) = S-adenosyl 3-(methylsulfanyl)propylamine + CO2. It participates in amine and polyamine biosynthesis; S-adenosylmethioninamine biosynthesis; S-adenosylmethioninamine from S-adenosyl-L-methionine: step 1/1. Its function is as follows. Catalyzes the decarboxylation of S-adenosylmethionine to S-adenosylmethioninamine (dcAdoMet), the propylamine donor required for the synthesis of the polyamines spermine and spermidine from the diamine putrescine. This chain is S-adenosylmethionine decarboxylase proenzyme, found in Geobacillus sp. (strain WCH70).